A 299-amino-acid chain; its full sequence is Acarbose 7(IV)-phosphotransferase (299 aa).

The protein belongs to the carbohydrate kinase PfkB family.

The catalysed reaction is acarbose + ATP = acarbose 7(IV)-phosphate + ADP + H(+). Its function is as follows. Catalyzes the phosphorylation of the alpha-glucosidase inhibitor acarbose. Phosphorylation of acarbose could be a resistance-like self-protection mechanism. This Actinoplanes sp. (strain ATCC 31044 / CBS 674.73 / SE50/110) protein is Acarbose 7(IV)-phosphotransferase.